The primary structure comprises 480 residues: Bifunctional pantoate ligase/cytidylate kinase (480 aa).

The tract at residues Met-1 to Val-243 is pantoate--beta-alanine ligase. An ATP-binding site is contributed by Met-4–His-11. The active-site Proton donor is His-11. Gln-34 is a (R)-pantoate binding site. Beta-alanine is bound at residue Gln-34. Gly-123–Asp-126 provides a ligand contact to ATP. Gln-129 is a (R)-pantoate binding site. ATP-binding positions include Val-152 and Leu-160 to Arg-163. Residues Phe-244–Gly-480 are cytidylate kinase.

The protein in the N-terminal section; belongs to the pantothenate synthetase family. It in the C-terminal section; belongs to the cytidylate kinase family. Type 1 subfamily.

The protein localises to the cytoplasm. It carries out the reaction (R)-pantoate + beta-alanine + ATP = (R)-pantothenate + AMP + diphosphate + H(+). The catalysed reaction is CMP + ATP = CDP + ADP. It catalyses the reaction dCMP + ATP = dCDP + ADP. It participates in cofactor biosynthesis; (R)-pantothenate biosynthesis; (R)-pantothenate from (R)-pantoate and beta-alanine: step 1/1. Its function is as follows. Catalyzes the condensation of pantoate with beta-alanine in an ATP-dependent reaction via a pantoyl-adenylate intermediate. Functionally, catalyzes the transfer of a phosphate group from ATP to either CMP or dCMP to form CDP or dCDP and ADP, respectively. This Synechococcus sp. (strain CC9605) protein is Bifunctional pantoate ligase/cytidylate kinase.